A 319-amino-acid polypeptide reads, in one-letter code: MVRVFFAGTPECAVPSLRRVACAHRVVGVLTNPPAAVGRSGKLVHSAVAREFFRLKASGVLPESASLFVPGRLDRAFYDAVEALRPDVLVCFAYGKIFGPRFLALFPRGAINVHPSLLPRWRGSTPVPAAILAGDCETGVTLQYIGEEMDAGDILAQSRVQLDGTETTGALLSRLSLVAADLVDDVLVGVERHTLAPAAQDHSQATFCGKLCREMGLADWSNPAVVLERKIRAFTPWPGLFTYKDGERIAILQARSCESSFVPLAPVGTVLAADKNGVFVQTGDGVLSLLQLQRSGKKPLFWRDFLNGSPLLLTGRLGV.

116-119 (SLLP) is a binding site for (6S)-5,6,7,8-tetrahydrofolate.

This sequence belongs to the Fmt family.

The catalysed reaction is L-methionyl-tRNA(fMet) + (6R)-10-formyltetrahydrofolate = N-formyl-L-methionyl-tRNA(fMet) + (6S)-5,6,7,8-tetrahydrofolate + H(+). Functionally, attaches a formyl group to the free amino group of methionyl-tRNA(fMet). The formyl group appears to play a dual role in the initiator identity of N-formylmethionyl-tRNA by promoting its recognition by IF2 and preventing the misappropriation of this tRNA by the elongation apparatus. The protein is Methionyl-tRNA formyltransferase of Treponema pallidum (strain Nichols).